Here is a 490-residue protein sequence, read N- to C-terminus: Thyroid hormone receptor alpha (490 aa).

Positions 1–32 (MEQKPSKVECGSDPEENSARSPDGKRKRKNGQ) are disordered. The interval 1 to 52 (MEQKPSKVECGSDPEENSARSPDGKRKRKNGQCSLKTSMSGYIPSYLDKDEQ) is modulating. 8 residues coordinate Zn(2+): cysteine 53, cysteine 56, cysteine 70, cysteine 73, cysteine 91, cysteine 97, cysteine 107, and cysteine 110. 2 NR C4-type zinc fingers span residues 53–73 (CVVC…CEGC) and 91–115 (CKYD…FKKC). Residues 53–127 (CVVCGDKATG…VGMAMDLVLD (75 aa)) constitute a DNA-binding region (nuclear receptor). The NR LBD domain occupies 163-407 (EEWDLIHIAT…EGQQLLGMHV (245 aa)). Residues arginine 228 and serine 277 each coordinate 3,3',5-triiodo-L-thyronine. The tract at residues 457–490 (AVCGEDDSSEADSPSSSEEEPEVCEDLAGNAASP) is disordered.

Belongs to the nuclear hormone receptor family. NR1 subfamily. In terms of assembly, binds DNA as a dimer; homodimer and heterodimer with RXRB. Interacts with NCOA3 and NCOA6 coactivators, leading to a strong increase of transcription of target genes. Probably interacts with SFPQ. Interacts with C1D. Interacts with AKAP13. Interacts with TP53INP2. Interacts with PER2. Isoform alpha-2 and isoform alpha-1 interact with TACC1, but the interaction with alpha-1 is weaker. The interaction with isoform alpha-1, but not alpha-2, is decreased in the presence of thyroid hormone T3.

The protein resides in the nucleus. The protein localises to the cytoplasm. In terms of biological role, nuclear hormone receptor that can act as a repressor or activator of transcription. High affinity receptor for thyroid hormones, including triiodothyronine and thyroxine. Does not bind thyroid hormone and functions as a weak dominant negative inhibitor of thyroid hormone action. In Homo sapiens (Human), this protein is Thyroid hormone receptor alpha (THRA).